Here is an 83-residue protein sequence, read N- to C-terminus: MRNTTFLVLNVMLLVSVALFCAADPEMEKSSFAEILDTGNPEQERKCLAEAADCSPWSGDSCCKPYLCSCIFFYPCSCRPKGW.

A signal peptide spans 1 to 23; sequence MRNTTFLVLNVMLLVSVALFCAA. A propeptide spanning residues 24 to 45 is cleaved from the precursor; it reads DPEMEKSSFAEILDTGNPEQER. 4 disulfide bridges follow: C47–C63, C54–C68, C62–C78, and C70–C76.

It belongs to the neurotoxin 07 (Beta/delta-agtx) family. As to expression, expressed by the venom gland.

The protein localises to the secreted. In terms of biological role, inhibits sodium channels (Nav) of insects. This chain is U2-hexatoxin-Hi1a, found in Hadronyche infensa (Fraser island funnel-web spider).